The chain runs to 88 residues: MKAIITVVGKDKSGIVAGVSGKIAELGLNIDDISQTVLDEYFTMMAVVSSDEKQDFTYLRNEFEAFGQTLNVKINIQSAAIFEAMYNI.

An ACT domain is found at 4 to 77; the sequence is IITVVGKDKS…QTLNVKINIQ (74 aa).

This sequence belongs to the UPF0237 family. Homodimer.

This is UPF0237 protein spr0217 from Streptococcus pneumoniae (strain ATCC BAA-255 / R6).